A 220-amino-acid chain; its full sequence is Large ribosomal subunit protein uL1 (220 aa).

This sequence belongs to the universal ribosomal protein uL1 family. Part of the 50S ribosomal subunit.

Its function is as follows. Binds directly to 23S rRNA. The L1 stalk is quite mobile in the ribosome, and is involved in E site tRNA release. Functionally, protein L1 is also a translational repressor protein, it controls the translation of the L11 operon by binding to its mRNA. This Ehrlichia ruminantium (strain Gardel) protein is Large ribosomal subunit protein uL1.